The sequence spans 274 residues: Putative ABC transporter ATP-binding protein alr3946 (274 aa).

The ABC transporter domain occupies 6–242 (LTFEQVYYTY…REILDSIELG (237 aa)). 40–47 (GRNGCGKT) provides a ligand contact to ATP.

This sequence belongs to the ABC transporter superfamily.

It is found in the cell inner membrane. Its function is as follows. Probably part of an ABC transporter complex. Responsible for energy coupling to the transport system. The polypeptide is Putative ABC transporter ATP-binding protein alr3946 (Nostoc sp. (strain PCC 7120 / SAG 25.82 / UTEX 2576)).